The sequence spans 485 residues: Adenylate kinase 8 (485 aa).

2 adenylate kinase regions span residues 58 to 258 (PRVF…TFVL) and 269 to 471 (PRIL…SYIV). 67–72 (ASGKHT) serves as a coordination point for ATP. The tract at residues 87 to 113 (TPENVLSSDVSLLVKEAQSYRDKGQEV) is NMP 1. AMP-binding positions include 140–143 (GFPK) and glutamine 147. The interval 177-206 (GKRIDITDGEVYHTTFDWPSDPAVQRNLVE) is LID 1. An AMP-binding site is contributed by arginine 218. 278–283 (GSGRSL) lines the ATP pocket. The NMP 2 stretch occupies residues 298-327 (CCGQVLKEAVADQTKLGELIQPYIENDQQV). AMP contacts are provided by residues 325–327 (QQV), 354–357 (GFPQ), and glutamine 361. An LID 2 region spans residues 391–424 (LCMTDPVSGERYHSIYKPAPRSEVQERLQQNPKY). Position 432 (arginine 432) interacts with AMP.

The protein belongs to the adenylate kinase family.

The protein localises to the cytoplasm. It is found in the cytosol. It catalyses the reaction AMP + ATP = 2 ADP. The enzyme catalyses a 2'-deoxyribonucleoside 5'-diphosphate + ATP = a 2'-deoxyribonucleoside 5'-triphosphate + ADP. The catalysed reaction is a ribonucleoside 5'-diphosphate + ATP = a ribonucleoside 5'-triphosphate + ADP. Its function is as follows. Nucleoside monophosphate (NMP) kinase that catalyzes the reversible transfer of the terminal phosphate group between nucleoside triphosphates and monophosphates. Has highest activity toward AMP, and weaker activity toward dAMP, CMP and dCMP. Also displays broad nucleoside diphosphate kinase activity. The polypeptide is Adenylate kinase 8 (ak8) (Xenopus laevis (African clawed frog)).